A 1465-amino-acid polypeptide reads, in one-letter code: Protein clueless (1465 aa).

Residues 1–87 (MALEIDAKNA…SNGHSENGDA (87 aa)) form a disordered region. A compositionally biased stretch (low complexity) spans 30-51 (HNNNNNAPAAGEKNLVNGSSAA). Over residues 52–61 (TKKKGKKNRN) the composition is skewed to basic residues. The residue at position 273 (Ser273) is a Phosphoserine. Positions 427 to 669 (RAEDAFSSKL…RTFPPDVNFL (243 aa)) constitute a Clu domain. Residues 742–767 (AEKQEEPNEEQPEKTEEQPAEKEESK) show a composition bias toward basic and acidic residues. Disordered regions lie at residues 742-776 (AEKQEEPNEEQPEKTEEQPAEKEESKPTPSETKSA) and 962-1021 (VSSD…SNSD). Residues 970 to 986 (KQPRNNSGKHNKHKAAK) show a composition bias toward basic residues. 2 stretches are compositionally biased toward low complexity: residues 987-1003 (ASKPQAAAAQNGNATAA) and 1010-1020 (ATTSGATSSNS). 3 TPR repeats span residues 1114–1147 (AYNFYTTGQAKIQQGMLKEGYELISEALNLLNNV), 1240–1273 (ALIDSNISLILHALGEYELSLRFIEHALKLNLKY), and 1275–1308 (GNKAMHVAVSYHLMARIQSCMGDFRSALNNEKET). Residues 1428–1465 (NNNDNASETEQPKDEASAAGTPTQLTNGSEESTATVSS) form a disordered region. A compositionally biased stretch (polar residues) spans 1447 to 1465 (GTPTQLTNGSEESTATVSS).

The protein belongs to the CLU family.

The protein resides in the cytoplasm. Its function is as follows. mRNA-binding protein involved in proper cytoplasmic distribution of mitochondria. The polypeptide is Protein clueless (Drosophila virilis (Fruit fly)).